Reading from the N-terminus, the 389-residue chain is Phospholipid phosphatase-related protein type 2 (389 aa).

The next 2 helical transmembrane spans lie at 14–34 (IIPC…AFFP) and 66–86 (FLGV…AGQV). N102 carries an N-linked (GlcNAc...) asparagine glycan. 3 consecutive transmembrane segments (helical) span residues 147–167 (AALC…VFRV), 176–196 (SLCL…VAEY), and 203–223 (VLAG…CVVH). 2 positions are modified to phosphoserine: S236 and S249. Disordered stretches follow at residues 255-280 (SVAQ…PQNC) and 295-351 (APAM…GRKL). Positions 265–278 (SHSTPARLTPSKPQ) are enriched in polar residues. A compositionally biased stretch (pro residues) spans 314–339 (TPLPLPLPLPAPAPSQGPSPSSPGPG).

The protein belongs to the PA-phosphatase related phosphoesterase family.

It is found in the membrane. The protein is Phospholipid phosphatase-related protein type 2 of Bos taurus (Bovine).